A 280-amino-acid chain; its full sequence is MAFSGHHARKRFAQHWLIDAAVLTQILDAADVQPDDRLLEVGPGRGALTERLLASSASAVHAVELDRDLVSGLKQRFADQARFSLQEGDVLSVPLTLADGRAATKVVANIPYNITGPLLERLLGRLDRPVDHPYQRLVLLLQKEVAQRIRALPGQSCFSALSVRLQLLARCTTVCPVPPRSFKPPPKVHSEVILIEPLAPEQRLEPLLAKRVESLLRQAFLARRKMLRNTLAKVLPAAELNALADDLGISLQQRPQELSPATWVELARGLNRADLVDPEP.

Histidine 15, leucine 17, glycine 42, glutamate 64, aspartate 89, and asparagine 109 together coordinate S-adenosyl-L-methionine.

This sequence belongs to the class I-like SAM-binding methyltransferase superfamily. rRNA adenine N(6)-methyltransferase family. RsmA subfamily.

Its subcellular location is the cytoplasm. It carries out the reaction adenosine(1518)/adenosine(1519) in 16S rRNA + 4 S-adenosyl-L-methionine = N(6)-dimethyladenosine(1518)/N(6)-dimethyladenosine(1519) in 16S rRNA + 4 S-adenosyl-L-homocysteine + 4 H(+). Specifically dimethylates two adjacent adenosines (A1518 and A1519) in the loop of a conserved hairpin near the 3'-end of 16S rRNA in the 30S particle. May play a critical role in biogenesis of 30S subunits. This Prochlorococcus marinus (strain MIT 9313) protein is Ribosomal RNA small subunit methyltransferase A.